A 118-amino-acid polypeptide reads, in one-letter code: UPF0102 protein RHA1_ro06551 (118 aa).

Belongs to the UPF0102 family.

The sequence is that of UPF0102 protein RHA1_ro06551 from Rhodococcus jostii (strain RHA1).